The following is a 3259-amino-acid chain: Striated muscle-specific serine/threonine-protein kinase (3259 aa).

The segment at 1-30 (MQKARGTRGEDAGTRAPPSPGVPPKRAKVG) is disordered. The residue at position 33 (Arg-33) is an Omega-N-methylarginine. The 82-residue stretch at 45-126 (PVFLRPLKNA…GKASCEAVLT (82 aa)) folds into the Ig-like 1 domain. Phosphoserine is present on Ser-141. Disordered stretches follow at residues 155-185 (RAFSTPTGGSDTLVGTSLDTPPTSVTGTSEE), 198-226 (EQEAGSGGGTRPLPGSPRQAQTTGAGPRH), 278-716 (PSGL…DDSY), and 816-880 (VRPG…KVSL). Residues 158–185 (STPTGGSDTLVGTSLDTPPTSVTGTSEE) show a composition bias toward polar residues. A compositionally biased stretch (pro residues) spans 301–317 (PALPPPSKSALLPPPSP). 2 positions are modified to phosphoserine: Ser-368 and Ser-375. The residue at position 379 (Thr-379) is a Phosphothreonine. Phosphoserine is present on residues Ser-382 and Ser-385. The span at 404–422 (ILDKLQFFEERRRSLERSD) shows a compositional bias: basic and acidic residues. At Ser-423 the chain carries Phosphoserine. Thr-453 carries the post-translational modification Phosphothreonine. Phosphoserine occurs at positions 457, 463, 493, 511, 531, and 554. The segment covering 459–473 (EELRSPRGSVAERRR) has biased composition (basic and acidic residues). Residues 510-522 (TSREELVRSHESL) are compositionally biased toward basic and acidic residues. Composition is skewed to basic and acidic residues over residues 624–638 (PESRTKAPSARKREP) and 663–680 (EKNRAGPEAEKRLRRGPE). Positions 727–817 (PVFEIPLQNM…ASCASSLAVR (91 aa)) constitute an Ig-like 2 domain. The span at 820-830 (ASTSPFSSPIT) shows a compositional bias: polar residues. Ig-like domains are found at residues 874–963 (PTFK…ARLE), 968–1056 (PESR…DELT), and 1069–1157 (PLFT…AQLY). A disulfide bridge links Cys-994 with Cys-1046. Ser-1133 and Ser-1177 each carry phosphoserine. Residues 1162–1185 (RTAASGPSSKLEKMPSIPEEPEHG) are disordered. The region spanning 1193–1283 (PDFLRPLQDL…AACYAHLYVT (91 aa)) is the Ig-like 6 domain. One can recognise a Fibronectin type-III 1 domain in the interval 1290–1387 (PDGAPQVVAV…PSEPVQLLEH (98 aa)). Residues 1367 to 1379 (SSGKSSSKPSAPS) show a composition bias toward low complexity. The segment at 1367-1386 (SSGKSSSKPSAPSEPVQLLE) is disordered. An Ig-like 7 domain is found at 1490–1578 (PRFESIMEDV…GEVSCKAELS (89 aa)). Residues 1606–1859 (YDIHQEIGRG…AEETLEHPWF (254 aa)) enclose the Protein kinase 1 domain. ATP is bound by residues 1612–1620 (IGRGAFSYL) and Lys-1635. Asp-1724 (proton acceptor) is an active-site residue. 3 disordered regions span residues 1913–2244 (MPRR…QMPA), 2336–2451 (AKFK…SPVL), and 2463–2562 (RLSS…SQPN). Residues 1918-1927 (PPSGGLSSSS) are compositionally biased toward low complexity. 5 positions are modified to phosphoserine: Ser-1993, Ser-2004, Ser-2019, Ser-2020, and Ser-2042. Over residues 2009–2019 (SPRRPELRRGS) the composition is skewed to basic and acidic residues. Asymmetric dimethylarginine; alternate is present on Arg-2060. Position 2060 is an omega-N-methylarginine; alternate (Arg-2060). Over residues 2069-2081 (AQRLQALRQRLLR) the composition is skewed to low complexity. Ser-2114 and Ser-2135 each carry phosphoserine. Position 2144 is an omega-N-methylarginine (Arg-2144). The span at 2168 to 2179 (ESPSLSALSETQ) shows a compositional bias: polar residues. A compositionally biased stretch (pro residues) spans 2180–2189 (PPSPALPSAP). Residues Ser-2182 and Ser-2207 each carry the phosphoserine modification. Over residues 2193–2207 (ITKSPEPSAATSRDS) the composition is skewed to polar residues. The span at 2208–2218 (PQPPAPQPVPE) shows a compositional bias: pro residues. Basic and acidic residues predominate over residues 2219–2229 (KIPEPKPEPVR). Residues 2230 to 2244 (AAKPAQPPLALQMPA) show a composition bias toward low complexity. Basic and acidic residues predominate over residues 2336-2345 (AKFKRSRESP). Residues 2346–2355 (LSRGLRLLSR) are compositionally biased toward low complexity. Residues 2356–2372 (SRSEERGPFRGAEDDGI) are compositionally biased toward basic and acidic residues. Ser-2376 is modified (phosphoserine). Phosphothreonine is present on Thr-2380. The segment covering 2384–2395 (LVRRPERSRSVQ) has biased composition (basic and acidic residues). Phosphoserine is present on residues Ser-2410, Ser-2414, Ser-2438, Ser-2439, Ser-2444, and Ser-2448. Low complexity predominate over residues 2463 to 2484 (RLSSRLQRSGSSEDSGGASGRS). Polar residues predominate over residues 2510–2520 (QLASQTGATTP). Residues Ser-2521 and Ser-2524 each carry the phosphoserine modification. A compositionally biased stretch (low complexity) spans 2521–2540 (SAESLGSEASGTSGSSAPGE). Positions 2543–2554 (SRHRWGLSRLRK) are enriched in basic residues. Ser-2559 carries the phosphoserine modification. One can recognise an Ig-like 8 domain in the interval 2583 to 2673 (PPVFHIKLKD…GSITSSCTVA (91 aa)). Cys-2605 and Cys-2657 are disulfide-bonded. Positions 2680-2774 (KLAPPEVPQT…KVFIRGTQDS (95 aa)) constitute a Fibronectin type-III 2 domain. The residue at position 2771 (Thr-2771) is a Phosphothreonine. 2 disordered regions span residues 2771–2829 (TQDS…MSAN) and 2855–2957 (TQQA…PQKP). Ser-2774 is subject to Phosphoserine. Positions 2793 to 2810 (RAPPPDSPTSLVPTPPLA) are enriched in pro residues. Positions 2814–2828 (SQASTLSPSTSSMSA) are enriched in low complexity. One can recognise a Fibronectin type-III 3 domain in the interval 2859 to 2965 (EPSPPSILVT…KPYTFLEEKA (107 aa)). Polar residues predominate over residues 2880–2907 (GTLTPTSSPQGVKPAPSSSSLYMVTSFV). Positions 2910-2924 (PPDPQPPAPEPPPEP) are enriched in pro residues. Residues 2940-2950 (SSPTPESTTLR) are compositionally biased toward polar residues. Ser-2941 bears the Phosphoserine mark. In terms of domain architecture, Protein kinase 2 spans 2958–3210 (YTFLEEKARG…LQDCLAHPWL (253 aa)). ATP-binding positions include 2964–2972 (KARGRFGVV) and Lys-2987. Asp-3077 serves as the catalytic Proton acceptor.

The protein belongs to the protein kinase superfamily. CAMK Ser/Thr protein kinase family. In terms of assembly, interacts with MTM1. May be autophosphorylated. In terms of tissue distribution, isoform 2 is highly expressed in differentiated arterial smooth muscle cells (ASMC) in the medial layer of the aorta. Weakly detected in brain and testis and to a lesser extent in organs rich in striated muscle or visceral smooth muscle.

The protein resides in the nucleus. It carries out the reaction L-seryl-[protein] + ATP = O-phospho-L-seryl-[protein] + ADP + H(+). It catalyses the reaction L-threonyl-[protein] + ATP = O-phospho-L-threonyl-[protein] + ADP + H(+). In terms of biological role, isoform 2 may have a role in regulating the growth and differentiation of arterial smooth muscle cells. In Rattus norvegicus (Rat), this protein is Striated muscle-specific serine/threonine-protein kinase (Speg).